The following is a 617-amino-acid chain: MSDNQSWNSSGSEEDLEPESGPPVERCGVLSKWTNYIHGWQDRWVDLKNNTLSYYKSEDETEYGCRGSICLSKAVITPHEFDECRFDISVNDSVWYIRAQDPDHRQRWIDSIEQHKSESGYGSESSLRRHGSMVSLVSGASSYSATSTSSFKKGHSLREKLAEMETFRDILCRQVDTLQKYFDACAGAVSKDELERDKVEDDEDDFLHNHPNEDYIHSNNGNKEKLFQHVTPKCIDGIDFKGEAITFKATTAGILATLSHCIELMVKREDSWQKRLDKEIEKRRRVEEAYKNAMTELKKKSHFGGPDYEEGPNSLINEEEFFDAVEAALDRQDKIELCQSEKGRSHWPPSPPSSEAHTAAGSHRLVQAPPSCPPPTDLVSSSDEHRFRIQVEDMVQNHMTYSLQDVGGDANWQLVVEEGEMKVYRREVEENGIVLDPLKATHSVKGVTGHEVCQYFWNVDVRNDWETTIENFHVVEKLSPNAIIVYQTHKRVWPASQRDVLYLSAIRVVPAASENEMDTWIVCNFSVDHDKAPLNRCVRAKINIAMICQTLVSPPEGNKEISRDNIQCKITYVANVNPGGWAPASVLRAVAKREYPKFLKRFTSYVQEKTADKPILF.

The segment covering 1–11 (MSDNQSWNSSG) has biased composition (polar residues). The disordered stretch occupies residues 1 to 23 (MSDNQSWNSSGSEEDLEPESGPP). Residues 23–117 (PVERCGVLSK…WIDSIEQHKS (95 aa)) form the PH domain. The stretch at 268–302 (REDSWQKRLDKEIEKRRRVEEAYKNAMTELKKKSH) forms a coiled coil. The FFAT motif lies at 320–326 (EFFDAVE). Residues 341 to 382 (EKGRSHWPPSPPSSEAHTAAGSHRLVQAPPSCPPPTDLVSSS) form a disordered region. The START domain maps to 383–611 (DEHRFRIQVE…FTSYVQEKTA (229 aa)). Residues glutamate 466, glutamine 487, asparagine 524, and tyrosine 572 each coordinate an N-acylsphing-4-enine.

Its subcellular location is the cytoplasm. The protein resides in the golgi apparatus. The protein localises to the endoplasmic reticulum. The catalysed reaction is N-hexadecanoylsphing-4-enine(in) = N-hexadecanoylsphing-4-enine(out). May mediate the intracellular trafficking of ceramide in a non-vesicular manner. This is Ceramide transfer protein (cert1) from Xenopus laevis (African clawed frog).